A 189-amino-acid chain; its full sequence is Auxin-responsive protein IAA6 (189 aa).

The EAR-like (transcriptional repression) motif lies at 13 to 17 (LRLGL). The PB1 domain occupies 93–178 (IGYVKVSMDG…SCKRLRIVKR (86 aa)).

This sequence belongs to the Aux/IAA family. Homodimers and heterodimers. Interacts with TPL. In terms of tissue distribution, highly expressed in stems and flowers.

The protein localises to the nucleus. In terms of biological role, aux/IAA proteins are short-lived transcriptional factors that function as repressors of early auxin response genes at low auxin concentrations. Repression is thought to result from the interaction with auxin response factors (ARFs), proteins that bind to the auxin-responsive promoter element (AuxRE). Formation of heterodimers with ARF proteins may alter their ability to modulate early auxin response genes expression. The sequence is that of Auxin-responsive protein IAA6 (IAA6) from Arabidopsis thaliana (Mouse-ear cress).